Consider the following 302-residue polypeptide: Citrate lyase subunit beta (302 aa).

Substrate is bound by residues arginine 76 and glutamate 139. Residues glutamate 139 and aspartate 166 each contribute to the Mg(2+) site.

This sequence belongs to the HpcH/HpaI aldolase family. Citrate lyase beta subunit subfamily. Oligomer with a subunit composition of (alpha,beta,gamma)6. The cofactor is Mg(2+).

The protein localises to the cytoplasm. The catalysed reaction is citrate = oxaloacetate + acetate. The enzyme catalyses (3S)-citryl-CoA = oxaloacetate + acetyl-CoA. In terms of biological role, represents a citryl-ACP lyase. The chain is Citrate lyase subunit beta (citE) from Escherichia coli O6:H1 (strain CFT073 / ATCC 700928 / UPEC).